A 178-amino-acid chain; its full sequence is Caveolin-1 (178 aa).

Ser2 bears the N-acetylserine mark. Ser2 bears the Phosphoserine mark. Residues 2–94 are required for homooligomerization; sequence SGGKYVDSEG…WKASFTTFTV (93 aa). The Cytoplasmic segment spans residues 2 to 104; that stretch reads SGGKYVDSEG…TKYWFYRLLS (103 aa). Lys5 is subject to N6-acetyllysine; alternate. Residue Lys5 forms a Glycyl lysine isopeptide (Lys-Gly) (interchain with G-Cter in ubiquitin); alternate linkage. Tyr6 bears the Phosphotyrosine mark. Residue Ser9 is modified to Phosphoserine. A Phosphotyrosine; by ABL1 modification is found at Tyr14. Phosphotyrosine is present on Tyr25. Glycyl lysine isopeptide (Lys-Gly) (interchain with G-Cter in ubiquitin) cross-links involve residues Lys26 and Lys30. The residue at position 37 (Ser37) is a Phosphoserine. Glycyl lysine isopeptide (Lys-Gly) (interchain with G-Cter in ubiquitin) cross-links involve residues Lys39, Lys47, and Lys57. Positions 82–94 are interaction with CAVIN3; that stretch reads DGIWKASFTTFTV. An intramembrane region (helical) is located at residues 105-125; the sequence is ALFGIPMALIWGIYFAILSFL. Over 126 to 178 the chain is Cytoplasmic; sequence HIWAVVPCIKSFLIEIQCISRVYSIYVHTVCDPLFEAVGKIFSNVRINLQKEI. Positions 131–142 are interacts with SPRY1, SPRY2, SPRY3 and SPRY4; it reads VPCIKSFLIEIQ. 3 S-palmitoyl cysteine lipidation sites follow: Cys133, Cys143, and Cys156. The interacts with SPRY1, SPRY2, and SPRY4 stretch occupies residues 149–160; the sequence is SIYVHTVCDPLF. Residues 167-178 form an interacts with SPRY1, SPRY2, SPRY3 and SPRY4 region; sequence FSNVRINLQKEI.

It belongs to the caveolin family. In terms of assembly, homooligomer. Interacts (via the N-terminus) with DPP4; the interaction is direct. Forms a stable heterooligomeric complex with CAV2 that targets to lipid rafts and drives caveolae formation. Interacts with PACSIN2; this interaction induces membrane tubulation. Interacts with BMX, BTK, CTNNB1, CDH1, GLIPR2, JUP, NOSTRIN, SNAP25 and STX1A. Interacts with SLC7A9. Interacts with TGFBR1. Interacts with CAVIN3 (via leucine-zipper domain) in a cholesterol-sensitive manner. Interacts with CAVIN1. Interacts with EHD2 in a cholesterol-dependent manner. Forms a ternary complex with UBXN6 and VCP; mediates CAV1 targeting to lysosomes for degradation. Interacts with ABCG1; this interaction regulates ABCG1-mediated cholesterol efflux. Interacts with NEU3; this interaction enhances NEU3 sialidase activity within caveola. Interacts (via C-terminus) with SPRY1, SPRY2 (via C-terminus), SPRY3, and SPRY4. Interacts with IGFBP5; this interaction allows trafficking of IGFBP5 from the plasma membrane to the nucleus. In terms of processing, phosphorylated at Tyr-14 by ABL1 in response to oxidative stress. Ubiquitinated. Undergo monoubiquitination and multi- and/or polyubiquitination. Monoubiquitination of N-terminal lysines promotes integration in a ternary complex with UBXN6 and VCP which promotes oligomeric CAV1 targeting to lysosomes for degradation. Ubiquitinated by ZNRF1; leading to degradation and modulation of the TLR4-mediated immune response.

It is found in the golgi apparatus membrane. The protein localises to the cell membrane. The protein resides in the membrane. Its subcellular location is the caveola. It localises to the membrane raft. In terms of biological role, may act as a scaffolding protein within caveolar membranes. Forms a stable heterooligomeric complex with CAV2 that targets to lipid rafts and drives caveolae formation. Mediates the recruitment of CAVIN proteins (CAVIN1/2/3/4) to the caveolae. Interacts directly with G-protein alpha subunits and can functionally regulate their activity. Involved in the costimulatory signal essential for T-cell receptor (TCR)-mediated T-cell activation. Its binding to DPP4 induces T-cell proliferation and NF-kappa-B activation in a T-cell receptor/CD3-dependent manner. Recruits CTNNB1 to caveolar membranes and may regulate CTNNB1-mediated signaling through the Wnt pathway. Negatively regulates TGFB1-mediated activation of SMAD2/3 by mediating the internalization of TGFBR1 from membrane rafts leading to its subsequent degradation. Binds 20(S)-hydroxycholesterol (20(S)-OHC). The sequence is that of Caveolin-1 (CAV1) from Chlorocebus aethiops (Green monkey).